The sequence spans 331 residues: MSNVGFSATRGITSGAPDKVDMSLDDIIRLNKKEQQARRPSPGNRRPLQKGKVFVQGRPVGARARGQTQRGGGVPRGAITRAGVGRGRKIPPPVGRRRGQGVITGLAARKTAALQKGISPLNRPAINRKLQPFNNRSRPFNNQSRPFIQSAQYRQMQGQRRPYRQTDIQRGLNSTRPFQQRRRPLPPVQTQREARQATFLFRRGLKVHTQVPKPALTSIPPAPVRPRQWRTSTNSSGILTVSIDNPTAMTQSEPPCAWSLHPPAPTSSAPVKMKVEEEKKTEPPKGVPLQFDINIVGKPTAMTLNERFRILKDERVATAQTSKGSRFVTVG.

The short motif at 16–34 is the UAP56-binding motif element; sequence APDKVDMSLDDIIRLNKKE. Disordered regions lie at residues 30–51, 63–99, and 158–193; these read LNKK…LQKG, RARG…RRRG, and GQRR…TQRE. Polar residues predominate over residues 166 to 175; it reads TDIQRGLNST.

It belongs to the UIF family.

The protein resides in the nucleus. The protein localises to the nucleoplasm. It localises to the nucleus speckle. In terms of biological role, required for mRNA export from the nucleus to the cytoplasm. Acts as an adapter that uses the ddx39b/uap56-nfx1 pathway to ensure efficient mRNA export and delivering to the nuclear pore. This is UAP56-interacting factor (fyttd1) from Salmo salar (Atlantic salmon).